A 296-amino-acid polypeptide reads, in one-letter code: 4-hydroxy-tetrahydrodipicolinate synthase (296 aa).

Threonine 49 lines the pyruvate pocket. Tyrosine 137 acts as the Proton donor/acceptor in catalysis. Catalysis depends on lysine 165, which acts as the Schiff-base intermediate with substrate. Isoleucine 207 provides a ligand contact to pyruvate.

This sequence belongs to the DapA family. Homotetramer; dimer of dimers.

It localises to the cytoplasm. The catalysed reaction is L-aspartate 4-semialdehyde + pyruvate = (2S,4S)-4-hydroxy-2,3,4,5-tetrahydrodipicolinate + H2O + H(+). The protein operates within amino-acid biosynthesis; L-lysine biosynthesis via DAP pathway; (S)-tetrahydrodipicolinate from L-aspartate: step 3/4. Its function is as follows. Catalyzes the condensation of (S)-aspartate-beta-semialdehyde [(S)-ASA] and pyruvate to 4-hydroxy-tetrahydrodipicolinate (HTPA). This is 4-hydroxy-tetrahydrodipicolinate synthase from Afipia carboxidovorans (strain ATCC 49405 / DSM 1227 / KCTC 32145 / OM5) (Oligotropha carboxidovorans).